The chain runs to 714 residues: Fatty acid oxidation complex subunit alpha (714 aa).

The tract at residues Met1–Pro190 is enoyl-CoA hydratase. Residues Ala306–Gln714 form a 3-hydroxyacyl-CoA dehydrogenase region.

The protein in the N-terminal section; belongs to the enoyl-CoA hydratase/isomerase family. This sequence in the central section; belongs to the 3-hydroxyacyl-CoA dehydrogenase family. In terms of assembly, heterotetramer of two alpha chains (FadJ) and two beta chains (FadI).

The protein localises to the cytoplasm. It carries out the reaction a (3S)-3-hydroxyacyl-CoA = a (2E)-enoyl-CoA + H2O. It catalyses the reaction a 4-saturated-(3S)-3-hydroxyacyl-CoA = a (3E)-enoyl-CoA + H2O. The enzyme catalyses a (3S)-3-hydroxyacyl-CoA + NAD(+) = a 3-oxoacyl-CoA + NADH + H(+). The catalysed reaction is (3S)-3-hydroxybutanoyl-CoA = (3R)-3-hydroxybutanoyl-CoA. The protein operates within lipid metabolism; fatty acid beta-oxidation. Functionally, catalyzes the formation of a hydroxyacyl-CoA by addition of water on enoyl-CoA. Also exhibits 3-hydroxyacyl-CoA epimerase and 3-hydroxyacyl-CoA dehydrogenase activities. The sequence is that of Fatty acid oxidation complex subunit alpha from Escherichia coli O17:K52:H18 (strain UMN026 / ExPEC).